The sequence spans 218 residues: UPF0502 protein Mmwyl1_3509 (218 aa).

It belongs to the UPF0502 family.

This is UPF0502 protein Mmwyl1_3509 from Marinomonas sp. (strain MWYL1).